The following is a 475-amino-acid chain: Kynureninase (475 aa).

Residues L142, T143, 170–173 (FPSD), D255, H258, and Y280 each bind pyridoxal 5'-phosphate. The residue at position 281 (K281) is an N6-(pyridoxal phosphate)lysine. W320 and N348 together coordinate pyridoxal 5'-phosphate.

This sequence belongs to the kynureninase family. In terms of assembly, homodimer. Pyridoxal 5'-phosphate serves as cofactor.

The protein localises to the cytoplasm. The enzyme catalyses L-kynurenine + H2O = anthranilate + L-alanine + H(+). It carries out the reaction 3-hydroxy-L-kynurenine + H2O = 3-hydroxyanthranilate + L-alanine + H(+). The protein operates within amino-acid degradation; L-kynurenine degradation; L-alanine and anthranilate from L-kynurenine: step 1/1. It participates in cofactor biosynthesis; NAD(+) biosynthesis; quinolinate from L-kynurenine: step 2/3. Its function is as follows. Catalyzes the cleavage of L-kynurenine (L-Kyn) and L-3-hydroxykynurenine (L-3OHKyn) into anthranilic acid (AA) and 3-hydroxyanthranilic acid (3-OHAA), respectively. This chain is Kynureninase (bna5), found in Botryotinia fuckeliana (strain B05.10) (Noble rot fungus).